The primary structure comprises 375 residues: DNA replication and repair protein RecF (375 aa).

30–37 (GENAQGKT) serves as a coordination point for ATP.

Belongs to the RecF family.

The protein resides in the cytoplasm. Its function is as follows. The RecF protein is involved in DNA metabolism; it is required for DNA replication and normal SOS inducibility. RecF binds preferentially to single-stranded, linear DNA. It also seems to bind ATP. The protein is DNA replication and repair protein RecF of Enterococcus faecalis (strain ATCC 700802 / V583).